A 201-amino-acid chain; its full sequence is 3-isopropylmalate dehydratase small subunit (201 aa).

Belongs to the LeuD family. LeuD type 1 subfamily. In terms of assembly, heterodimer of LeuC and LeuD.

It catalyses the reaction (2R,3S)-3-isopropylmalate = (2S)-2-isopropylmalate. It functions in the pathway amino-acid biosynthesis; L-leucine biosynthesis; L-leucine from 3-methyl-2-oxobutanoate: step 2/4. In terms of biological role, catalyzes the isomerization between 2-isopropylmalate and 3-isopropylmalate, via the formation of 2-isopropylmaleate. In Paramagnetospirillum magneticum (strain ATCC 700264 / AMB-1) (Magnetospirillum magneticum), this protein is 3-isopropylmalate dehydratase small subunit.